Here is a 299-residue protein sequence, read N- to C-terminus: Delta-9 desaturase-like 2 protein (299 aa).

Residues 55-75 form a helical membrane-spanning segment; sequence WEAFRFGIILAILTNLCITFS. Positions 77–82 match the Histidine box-1 motif; sequence HRNLTH. The short motif at 114 to 118 is the Histidine box-2 element; sequence HRFHH. A helical membrane pass occupies residues 174–194; it reads LVLHILAFWTLIYLWGGLPYL. Positions 246–250 match the Histidine box-3 motif; it reads HNNHH. The chain crosses the membrane as a helical span at residues 262–282; the sequence is WYQLDITWYLIWFFQALGLAT.

The protein belongs to the fatty acid desaturase type 1 family. Fe cation is required as a cofactor.

The protein resides in the endoplasmic reticulum membrane. The protein operates within lipid metabolism; polyunsaturated fatty acid biosynthesis. This is Delta-9 desaturase-like 2 protein from Arabidopsis thaliana (Mouse-ear cress).